Here is a 201-residue protein sequence, read N- to C-terminus: UPF0301 protein MAP_0045 (201 aa).

Belongs to the UPF0301 (AlgH) family.

This Mycolicibacterium paratuberculosis (strain ATCC BAA-968 / K-10) (Mycobacterium paratuberculosis) protein is UPF0301 protein MAP_0045.